Reading from the N-terminus, the 320-residue chain is Protoheme IX farnesyltransferase 1 (320 aa).

A run of 9 helical transmembrane segments spans residues 34 to 54 (GIII…FASA), 58 to 78 (LTGL…AFVM), 112 to 132 (AMIL…LYSL), 135 to 155 (LTAF…TVWV), 160 to 180 (VWST…GYCA), 189 to 209 (AVLL…AIGI), 234 to 254 (IKMM…PFSL), 255 to 275 (GTGH…GIWI), and 299 to 319 (LIYF…MFLI).

It belongs to the UbiA prenyltransferase family. Protoheme IX farnesyltransferase subfamily. In terms of assembly, interacts with CtaA.

Its subcellular location is the cell membrane. It carries out the reaction heme b + (2E,6E)-farnesyl diphosphate + H2O = Fe(II)-heme o + diphosphate. Its pathway is porphyrin-containing compound metabolism; heme O biosynthesis; heme O from protoheme: step 1/1. Converts heme B (protoheme IX) to heme O by substitution of the vinyl group on carbon 2 of heme B porphyrin ring with a hydroxyethyl farnesyl side group. The polypeptide is Protoheme IX farnesyltransferase 1 (ctaB1) (Bacillus subtilis (strain 168)).